Reading from the N-terminus, the 723-residue chain is Probable alpha-fucosidase A (723 aa).

A signal peptide spans 1-15 (MRSLVLLGMSSLATA). Residues Asn-77, Asn-98, Asn-117, Asn-171, Asn-194, Asn-243, Asn-334, Asn-558, Asn-566, and Asn-595 are each glycosylated (N-linked (GlcNAc...) asparagine).

This sequence belongs to the glycosyl hydrolase 95 family.

It is found in the secreted. The catalysed reaction is an alpha-L-fucoside + H2O = L-fucose + an alcohol. Alpha-fucosidase involved in degradation of fucosylated xyloglucans. Hydrolyzes alpha-1,2-linked fucose. The sequence is that of Probable alpha-fucosidase A (afcA) from Aspergillus oryzae (strain ATCC 42149 / RIB 40) (Yellow koji mold).